Here is a 475-residue protein sequence, read N- to C-terminus: Ribulose bisphosphate carboxylase large chain (475 aa).

Positions 1–2 (MS) are excised as a propeptide. N-acetylproline is present on proline 3. Position 14 is an N6,N6,N6-trimethyllysine (lysine 14). The substrate site is built by asparagine 123 and threonine 173. Catalysis depends on lysine 175, which acts as the Proton acceptor. Position 177 (lysine 177) interacts with substrate. Residues lysine 201, aspartate 203, and glutamate 204 each coordinate Mg(2+). An N6-carboxylysine modification is found at lysine 201. Residue histidine 294 is the Proton acceptor of the active site. Positions 295, 327, and 379 each coordinate substrate.

The protein belongs to the RuBisCO large chain family. Type I subfamily. Heterohexadecamer of 8 large chains and 8 small chains; disulfide-linked. The disulfide link is formed within the large subunit homodimers. Mg(2+) is required as a cofactor. In terms of processing, the disulfide bond which can form in the large chain dimeric partners within the hexadecamer appears to be associated with oxidative stress and protein turnover.

It localises to the plastid. The protein resides in the chloroplast. The catalysed reaction is 2 (2R)-3-phosphoglycerate + 2 H(+) = D-ribulose 1,5-bisphosphate + CO2 + H2O. The enzyme catalyses D-ribulose 1,5-bisphosphate + O2 = 2-phosphoglycolate + (2R)-3-phosphoglycerate + 2 H(+). Its function is as follows. RuBisCO catalyzes two reactions: the carboxylation of D-ribulose 1,5-bisphosphate, the primary event in carbon dioxide fixation, as well as the oxidative fragmentation of the pentose substrate in the photorespiration process. Both reactions occur simultaneously and in competition at the same active site. The sequence is that of Ribulose bisphosphate carboxylase large chain from Populus trichocarpa (Western balsam poplar).